The sequence spans 188 residues: dCTP deaminase (188 aa).

Residues 111-116, 135-137, Gln-156, Tyr-170, and Gln-180 each bind dCTP; these read KSTYAR and TLE. Catalysis depends on Glu-137, which acts as the Proton donor/acceptor.

It belongs to the dCTP deaminase family. In terms of assembly, homotrimer.

It carries out the reaction dCTP + H2O + H(+) = dUTP + NH4(+). The protein operates within pyrimidine metabolism; dUMP biosynthesis; dUMP from dCTP (dUTP route): step 1/2. In terms of biological role, catalyzes the deamination of dCTP to dUTP. The sequence is that of dCTP deaminase from Methylococcus capsulatus (strain ATCC 33009 / NCIMB 11132 / Bath).